The chain runs to 711 residues: Zinc finger CCCH domain-containing protein 43 (711 aa).

Residues 1–49 (MPQDDDWFWGRPTPVVVGDGETTSKPKPPVAGKTKKVEEQHPRRPGEPD) form a disordered region. Over residues 35–47 (KKVEEQHPRRPGE) the composition is skewed to basic and acidic residues. 3 consecutive C3H1-type zinc fingers follow at residues 44-72 (RPGE…HPDP), 90-118 (RPGE…HPPR), and 157-185 (RPGT…HPDP). The region spanning 384–637 (LKTLKSILNT…GAISYLIEKE (254 aa)) is the MIF4G domain.

The polypeptide is Zinc finger CCCH domain-containing protein 43 (Oryza sativa subsp. japonica (Rice)).